A 548-amino-acid chain; its full sequence is Probable malate:quinone oxidoreductase (548 aa).

It belongs to the MQO family. FAD serves as cofactor.

The catalysed reaction is (S)-malate + a quinone = a quinol + oxaloacetate. It functions in the pathway carbohydrate metabolism; tricarboxylic acid cycle; oxaloacetate from (S)-malate (quinone route): step 1/1. The polypeptide is Probable malate:quinone oxidoreductase (Escherichia coli O127:H6 (strain E2348/69 / EPEC)).